Consider the following 289-residue polypeptide: Syntaxin-2 (289 aa).

The Cytoplasmic segment spans residues 1–265; sequence MRDRLPDLTA…KYQSKARRKK (265 aa). Residues 68–101 are a coiled coil; sequence EGKIKEELEDLDKEIKKTANRIRGKLKSIEQSCD. Positions 192–254 constitute a t-SNARE coiled-coil homology domain; that stretch reads LNEIESRHKD…EHAKEETKKA (63 aa). A helical; Anchor for type IV membrane protein membrane pass occupies residues 266–289; it reads WIIAAVAVAVIAVLALIIGLSVGK.

Belongs to the syntaxin family. In terms of assembly, interacts with SYT6 and SYT8; the interaction is Ca(2+)-dependent.

It localises to the membrane. In terms of biological role, essential for epithelial morphogenesis. May mediate Ca(2+)-regulation of exocytosis acrosomal reaction in sperm. This is Syntaxin-2 (Stx2) from Mus musculus (Mouse).